The chain runs to 301 residues: 2-methylisocitrate lyase (301 aa).

A substrate-binding site is contributed by 53-55 (SGA). Residues Asp-92 and Asp-94 each contribute to the Mg(2+) site. Residues 129 to 130 (CG), Arg-162, Glu-192, 214 to 216 (NMT), Arg-245, and Arg-274 contribute to the substrate site.

Belongs to the isocitrate lyase/PEP mutase superfamily. Methylisocitrate lyase family. Mg(2+) serves as cofactor.

It catalyses the reaction 3-hydroxybutane-1,2,3-tricarboxylate = pyruvate + succinate. In terms of biological role, involved in the methylcitric acid cycle. Catalyzes the cleavage of 2-methylisocitrate to yield pyruvate and succinate. In Bacillus subtilis (strain 168), this protein is 2-methylisocitrate lyase.